Consider the following 212-residue polypeptide: Urease accessory protein UreG 2 (212 aa).

11 to 18 (GPVGSGKT) is a binding site for GTP.

This sequence belongs to the SIMIBI class G3E GTPase family. UreG subfamily. Homodimer. UreD, UreF and UreG form a complex that acts as a GTP-hydrolysis-dependent molecular chaperone, activating the urease apoprotein by helping to assemble the nickel containing metallocenter of UreC. The UreE protein probably delivers the nickel.

Its subcellular location is the cytoplasm. Its function is as follows. Facilitates the functional incorporation of the urease nickel metallocenter. This process requires GTP hydrolysis, probably effectuated by UreG. The sequence is that of Urease accessory protein UreG 2 from Brucella abortus (strain 2308).